A 264-amino-acid polypeptide reads, in one-letter code: Myozenin-2 (264 aa).

At arginine 53 the chain carries Omega-N-methylarginine. The interval 90-135 (GKVDGSNLEGGSQQAPLTPPNTPDPRSPPNPDNIAPGYSGPLKEIP) is disordered. Serine 101 carries the phosphoserine modification. Pro residues predominate over residues 106–120 (LTPPNTPDPRSPPNP). A phosphothreonine mark is found at threonine 107 and threonine 111. Serine 116 carries the post-translational modification Phosphoserine.

The protein belongs to the myozenin family. Interacts via its C-terminus with spectrin repeats 3 and 4 of ACTN2. Interacts with ACTN1, LDB3, MYOT and PPP3CA.

It is found in the cytoplasm. It localises to the myofibril. The protein resides in the sarcomere. Its subcellular location is the z line. Its function is as follows. Myozenins may serve as intracellular binding proteins involved in linking Z line proteins such as alpha-actinin, gamma-filamin, TCAP/telethonin, LDB3/ZASP and localizing calcineurin signaling to the sarcomere. Plays an important role in the modulation of calcineurin signaling. May play a role in myofibrillogenesis. This Pongo abelii (Sumatran orangutan) protein is Myozenin-2 (MYOZ2).